We begin with the raw amino-acid sequence, 160 residues long: Ribosome maturation factor RimP (160 aa).

Belongs to the RimP family.

Its subcellular location is the cytoplasm. Its function is as follows. Required for maturation of 30S ribosomal subunits. This Syntrophus aciditrophicus (strain SB) protein is Ribosome maturation factor RimP.